A 361-amino-acid polypeptide reads, in one-letter code: MPLERLNFLGLRNLAALDMRPGPGINLITGANGSGKTSLLEGMHVLGMARSFRTQKLKHAIAHDADAVTLHGRVAGDPPVALGVRRARDASELEIRLDGERGVRVARLAEALPLQLINPDAFRLLEGSPAARREFLDWGVFHVKHEFFEAWRRVRRALKHRNALLRHDRIDARSMRVWEQELAHWSELLDALRSEYMAQFAKAFEDTLHELLPLSGLSLRYYRGWDKQRGLLEVLEGGRDTDRQMGFTQQGPQRADLRLRIGKRAAVEELSRGQQKLVVSALKLAQGRLLDELTGRTCVYLIDDLPAELDVTHRRIFCHWLERLRCQVFITSVEREALANAWQSETDVAMFHVEHGRLLTE.

30–37 (GANGSGKT) serves as a coordination point for ATP.

It belongs to the RecF family.

It localises to the cytoplasm. In terms of biological role, the RecF protein is involved in DNA metabolism; it is required for DNA replication and normal SOS inducibility. RecF binds preferentially to single-stranded, linear DNA. It also seems to bind ATP. The chain is DNA replication and repair protein RecF from Chromohalobacter salexigens (strain ATCC BAA-138 / DSM 3043 / CIP 106854 / NCIMB 13768 / 1H11).